The sequence spans 720 residues: Casein kinase II subunit alpha'-interacting protein (720 aa).

The segment covering 227–249 (LSSPSFTNRLQRNSFPPTSSSLE) has biased composition (polar residues). Disordered regions lie at residues 227–250 (LSSP…SLEF), 264–303 (KPLK…SRRL), 333–366 (QNTA…SPKP), 602–640 (TQVQ…VDPT), and 678–698 (LRQS…KCLK). The segment covering 608-626 (SSSSSSSCSSVSSSSSASS) has biased composition (low complexity). Positions 630–640 (PSPPTPWVDPT) are enriched in pro residues. A compositionally biased stretch (basic residues) spans 687-698 (KPVRSHNSKCLK).

Interacts (via C-terminus) with CSNK2A2. Post-translationally, phosphorylated by CK2 (casein kinase II), specifically by complexes containing catalytic subunit CSNK2A2. In terms of tissue distribution, expressed exclusively in testis (at protein level). Within testis, expressed mainly in the intermediate compartment of the seminiferous tubules with weaker expression in the basal and adluminal compartments.

It is found in the nucleus. In terms of biological role, may play a role in chromatin regulation of male germ cells. This is Casein kinase II subunit alpha'-interacting protein from Mus musculus (Mouse).